Reading from the N-terminus, the 293-residue chain is 4-diphosphocytidyl-2-C-methyl-D-erythritol kinase (293 aa).

The active site involves lysine 16. 99-109 contributes to the ATP binding site; that stretch reads PMGAGLGGGSS. The active site involves aspartate 141.

This sequence belongs to the GHMP kinase family. IspE subfamily.

The catalysed reaction is 4-CDP-2-C-methyl-D-erythritol + ATP = 4-CDP-2-C-methyl-D-erythritol 2-phosphate + ADP + H(+). The protein operates within isoprenoid biosynthesis; isopentenyl diphosphate biosynthesis via DXP pathway; isopentenyl diphosphate from 1-deoxy-D-xylulose 5-phosphate: step 3/6. Its function is as follows. Catalyzes the phosphorylation of the position 2 hydroxy group of 4-diphosphocytidyl-2C-methyl-D-erythritol. The polypeptide is 4-diphosphocytidyl-2-C-methyl-D-erythritol kinase (Paraburkholderia phymatum (strain DSM 17167 / CIP 108236 / LMG 21445 / STM815) (Burkholderia phymatum)).